A 180-amino-acid polypeptide reads, in one-letter code: Adenine phosphoribosyltransferase (180 aa).

This sequence belongs to the purine/pyrimidine phosphoribosyltransferase family. As to quaternary structure, homodimer.

The protein localises to the cytoplasm. It catalyses the reaction AMP + diphosphate = 5-phospho-alpha-D-ribose 1-diphosphate + adenine. It functions in the pathway purine metabolism; AMP biosynthesis via salvage pathway; AMP from adenine: step 1/1. Functionally, catalyzes a salvage reaction resulting in the formation of AMP, that is energically less costly than de novo synthesis. In Mycoplasma genitalium (strain ATCC 33530 / DSM 19775 / NCTC 10195 / G37) (Mycoplasmoides genitalium), this protein is Adenine phosphoribosyltransferase.